Here is a 267-residue protein sequence, read N- to C-terminus: Tetrahydromethanopterin S-methyltransferase subunit C (267 aa).

The next 7 helical transmembrane spans lie at 19 to 39, 40 to 60, 75 to 95, 96 to 116, 131 to 151, 162 to 182, and 221 to 241; these read IMAI…FMPA, QFSF…ADAV, IGMI…SVGG, IAGP…IGVL, AMVE…VVIA, YVVA…GILH, and GLMA…WAFM.

It belongs to the MtrC family. In terms of assembly, the complex is composed of 8 subunits; MtrA, MtrB, MtrC, MtrD, MtrE, MtrF, MtrG and MtrH.

Its subcellular location is the cell membrane. The catalysed reaction is 5-methyl-5,6,7,8-tetrahydromethanopterin + coenzyme M + 2 Na(+)(in) = 5,6,7,8-tetrahydromethanopterin + methyl-coenzyme M + 2 Na(+)(out). The protein operates within one-carbon metabolism; methanogenesis from CO(2); methyl-coenzyme M from 5,10-methylene-5,6,7,8-tetrahydromethanopterin: step 2/2. In terms of biological role, part of a complex that catalyzes the formation of methyl-coenzyme M and tetrahydromethanopterin from coenzyme M and methyl-tetrahydromethanopterin. This is an energy-conserving, sodium-ion translocating step. In Methanosarcina acetivorans (strain ATCC 35395 / DSM 2834 / JCM 12185 / C2A), this protein is Tetrahydromethanopterin S-methyltransferase subunit C.